The primary structure comprises 1979 residues: E3 ubiquitin-protein ligase TTC3 (1979 aa).

The tract at residues Met1–Gln230 is interaction with POLG. TPR repeat units lie at residues Gly231–Asn264 and Leu266–Trp298. Ser378 is subject to Phosphoserine. Residues Cys422–Glu457 are disordered. TPR repeat units lie at residues Val536 to Glu572 and Cys576 to Leu609. The tract at residues Leu783 to Gln811 is disordered. Ser1009 carries the post-translational modification Phosphoserine. 7 disordered regions span residues Asn1021–Ala1067, Gln1214–Lys1289, Gln1402–Ser1427, Lys1574–Thr1601, Met1757–Thr1776, Lys1788–Ser1821, and Asp1873–Asp1927. Over residues Val1036 to Val1050 the composition is skewed to low complexity. Ser1060 is subject to Phosphoserine. A compositionally biased stretch (basic and acidic residues) spans Gln1214–Lys1227. Over residues Asp1248–Ser1257 the composition is skewed to low complexity. Residues Asp1576 to Pro1586 show a composition bias toward basic and acidic residues. Polar residues-rich tracts occupy residues Lys1788–Ser1799 and Gly1808–Ser1821. At Ser1794 the chain carries Phosphoserine. The segment covering Asp1873–Glu1890 has biased composition (basic and acidic residues). An RING-type; atypical zinc finger spans residues Cys1931 to Gly1971.

Interacts (when phosphorylated on Ser-378) with AKT1, AKT2 and AKT3 (when phosphorylated). Interacts with CIT. Interacts with POLG. Interacts with HSP70. Interacts with SMURF2. In terms of processing, phosphorylation on Ser-378 by Akt is required for ubiquitin ligase activity. Post-translationally, proteolytically cleaved into differently sized N- and C-terminal fragments.

It is found in the nucleus. The protein resides in the cytoplasm. It localises to the golgi apparatus. The enzyme catalyses S-ubiquitinyl-[E2 ubiquitin-conjugating enzyme]-L-cysteine + [acceptor protein]-L-lysine = [E2 ubiquitin-conjugating enzyme]-L-cysteine + N(6)-ubiquitinyl-[acceptor protein]-L-lysine.. It participates in protein modification; protein ubiquitination. E3 ubiquitin-protein ligase which catalyzes the formation of 'Lys-48'-polyubiquitin chains. Mediates the ubiquitination and subsequent degradation of phosphorylated Akt (AKT1, AKT2 and AKT3) in the nucleus. Acts as a terminal regulator of Akt signaling after activation; its phosphorylation by Akt, which is a prerequisite for ubiquitin ligase activity, suggests the existence of a regulation mechanism required to control Akt levels after activation. Positively regulates TGFB1-induced epithelial-mesenchymal transition and myofibroblast differentiation by mediating the ubiquitination and subsequent degradation of SMURF2. Regulates neuronal differentiation by regulating actin remodeling and Golgi organization via a signaling cascade involving RHOA, CIT and ROCK. Inhibits cell proliferation. This is E3 ubiquitin-protein ligase TTC3 (Ttc3) from Mus musculus (Mouse).